The following is a 149-amino-acid chain: Small ribosomal subunit protein uS13 (149 aa).

It belongs to the universal ribosomal protein uS13 family. In terms of assembly, part of the 30S ribosomal subunit. Forms a loose heterodimer with protein S19. Forms two bridges to the 50S subunit in the 70S ribosome.

Located at the top of the head of the 30S subunit, it contacts several helices of the 16S rRNA. In the 70S ribosome it contacts the 23S rRNA (bridge B1a) and protein L5 of the 50S subunit (bridge B1b), connecting the 2 subunits; these bridges are implicated in subunit movement. This Methanococcus maripaludis (strain DSM 14266 / JCM 13030 / NBRC 101832 / S2 / LL) protein is Small ribosomal subunit protein uS13.